Here is a 992-residue protein sequence, read N- to C-terminus: Vacuolar membrane protease (992 aa).

Residues 1–24 (MSPAMANPRVRKFNPIAFTPLPVT) are Cytoplasmic-facing. A helical transmembrane segment spans residues 25–45 (FITTIVYLAVLILVLVTYLVV). The Vacuolar portion of the chain corresponds to 46–390 (PPAPTLEMSP…SAFAVFRLHT (345 aa)). N59, N115, and N118 each carry an N-linked (GlcNAc...) asparagine glycan. H174 and D186 together coordinate Zn(2+). E220 (proton acceptor) is an active-site residue. E221 provides a ligand contact to Zn(2+). The N-linked (GlcNAc...) asparagine glycan is linked to N237. The Zn(2+) site is built by E246 and H319. Residues 391-411 (LFALSVTLLVIGPLVLFITSI) traverse the membrane as a helical segment. Topologically, residues 412–446 (ALSKTDRMYLFSMSKSLGGASETVSLRGLRGLFRT) are cytoplasmic. A helical transmembrane segment spans residues 447-467 (PIILTVTTVIPIGLAYLLEKI). The Vacuolar segment spans residues 468–474 (NPYIVHS). Residues 475-495 (SQFAVWSMMLSVWIFVAWFLA) traverse the membrane as a helical segment. The Cytoplasmic portion of the chain corresponds to 496–508 (RVADFFRPSALHR). A helical transmembrane segment spans residues 509–529 (AYSYTWIFIVTWIMLVISTVY). The Vacuolar portion of the chain corresponds to 530-533 (ANQK). Residues 534 to 554 (GIAAGYFTFFYFAAVFLATWV) form a helical membrane-spanning segment. Residues 555-671 (SYLELFSLPR…WSWTLPRWTW (117 aa)) are Cytoplasmic-facing. Positions 579-620 (RSSSLSSRLLTPSADELPSDIGPNGAENVGDPDETDPTESTS) are disordered. Residues 672–692 (ILQLLLLAPIVIILVGQVGLL) traverse the membrane as a helical segment. Over 693–708 (LTTAMSQIGSDGVSTF) the chain is Vacuolar. Residues 709-729 (IVYLACALFSTLLFAPLLPFI) form a helical membrane-spanning segment. Over 730–736 (HRFTYHV) the chain is Cytoplasmic. The chain crosses the membrane as a helical span at residues 737–757 (PTFLLLIFIGTLIYNLVAFPF). The Vacuolar segment spans residues 758 to 992 (SPANRLKIFF…VEASHDFIIQ (235 aa)). N-linked (GlcNAc...) asparagine glycans are attached at residues N805, N846, and N954.

The protein belongs to the peptidase M28 family. Zn(2+) is required as a cofactor.

It localises to the vacuole membrane. Functionally, may be involved in vacuolar sorting and osmoregulation. In Paracoccidioides brasiliensis (strain Pb03), this protein is Vacuolar membrane protease.